Here is a 449-residue protein sequence, read N- to C-terminus: Glutamyl-tRNA reductase (449 aa).

Substrate contacts are provided by residues 58–61, Ser121, 126–128, and Gln132; these read TCNR and ETQ. Residue Cys59 is the Nucleophile of the active site. NADP(+) is bound at residue 203–208; the sequence is GLGEMA.

Belongs to the glutamyl-tRNA reductase family. Homodimer.

It carries out the reaction (S)-4-amino-5-oxopentanoate + tRNA(Glu) + NADP(+) = L-glutamyl-tRNA(Glu) + NADPH + H(+). It functions in the pathway porphyrin-containing compound metabolism; protoporphyrin-IX biosynthesis; 5-aminolevulinate from L-glutamyl-tRNA(Glu): step 1/2. Its function is as follows. Catalyzes the NADPH-dependent reduction of glutamyl-tRNA(Glu) to glutamate 1-semialdehyde (GSA). This chain is Glutamyl-tRNA reductase, found in Helicobacter pylori (strain G27).